The sequence spans 247 residues: 3-oxoacyl-[acyl-carrier-protein] reductase (247 aa).

11–35 (VTGASRGIGKATALALAATGMKVVV) serves as a coordination point for NADP(+). Ser-143 serves as a coordination point for substrate. Tyr-156 functions as the Proton acceptor in the catalytic mechanism.

This sequence belongs to the short-chain dehydrogenases/reductases (SDR) family.

It carries out the reaction a (3R)-hydroxyacyl-[ACP] + NADP(+) = a 3-oxoacyl-[ACP] + NADPH + H(+). It functions in the pathway lipid metabolism; fatty acid biosynthesis. Functionally, catalyzes the NADPH-dependent reduction of beta-ketoacyl-ACP substrates to beta-hydroxyacyl-ACP products, the first reductive step in the elongation cycle of fatty acid biosynthesis. Is capable of reducing acetoacetyl-CoA, but less well than its paralog PhaB. The polypeptide is 3-oxoacyl-[acyl-carrier-protein] reductase (fabG) (Synechocystis sp. (strain ATCC 27184 / PCC 6803 / Kazusa)).